Here is a 116-residue protein sequence, read N- to C-terminus: Iron-sulfur cluster insertion protein ErpA (116 aa).

The iron-sulfur cluster site is built by Cys44, Cys108, and Cys110.

The protein belongs to the HesB/IscA family. As to quaternary structure, homodimer. Requires iron-sulfur cluster as cofactor.

Functionally, required for insertion of 4Fe-4S clusters for at least IspG. The chain is Iron-sulfur cluster insertion protein ErpA from Pseudomonas fluorescens (strain Pf0-1).